We begin with the raw amino-acid sequence, 342 residues long: Succinylglutamate desuccinylase (342 aa).

Positions 63, 66, and 155 each coordinate Zn(2+). Glutamate 219 is a catalytic residue.

This sequence belongs to the AspA/AstE family. Succinylglutamate desuccinylase subfamily. The cofactor is Zn(2+).

It carries out the reaction N-succinyl-L-glutamate + H2O = L-glutamate + succinate. It functions in the pathway amino-acid degradation; L-arginine degradation via AST pathway; L-glutamate and succinate from L-arginine: step 5/5. In terms of biological role, transforms N(2)-succinylglutamate into succinate and glutamate. The protein is Succinylglutamate desuccinylase of Vibrio campbellii (strain ATCC BAA-1116).